A 404-amino-acid chain; its full sequence is Biflaviolin synthase CYP158A2 (404 aa).

2 residues coordinate flaviolin: R288 and L293. C353 contributes to the heme binding site.

The protein belongs to the cytochrome P450 family. Requires heme as cofactor.

The enzyme catalyses 2 flaviolin + 2 reduced [2Fe-2S]-[ferredoxin] + O2 + H(+) = 3,3'-biflaviolin + 2 oxidized [2Fe-2S]-[ferredoxin] + 2 H2O. It catalyses the reaction 2 flaviolin + 2 reduced [2Fe-2S]-[ferredoxin] + O2 + H(+) = 3,8'-biflaviolin + 2 oxidized [2Fe-2S]-[ferredoxin] + 2 H2O. It functions in the pathway pigment biosynthesis. Functionally, catalyzes oxidative C-C coupling reaction to polymerize flaviolin and form highly conjugated pigments which protect the soil bacterium from deleterious effects of UV irradiation (three isomers of biflaviolin and one triflaviolin). This Streptomyces coelicolor (strain ATCC BAA-471 / A3(2) / M145) protein is Biflaviolin synthase CYP158A2.